Consider the following 92-residue polypeptide: N(2)-fixation sustaining protein CowN (92 aa).

The protein belongs to the CowN family.

Is required to sustain N(2)-dependent growth in the presence of low levels of carbon monoxide (CO). Probably acts by protecting the N(2) fixation ability of the nitrogenase complex, which is inactivated in the presence of CO. The chain is N(2)-fixation sustaining protein CowN from Rhodopseudomonas palustris (strain ATCC BAA-98 / CGA009).